Consider the following 333-residue polypeptide: 4-hydroxyproline 2-epimerase (333 aa).

Cysteine 90 acts as the Proton acceptor in catalysis. Residues glycine 91–histidine 92, histidine 223, and aspartate 249 each bind substrate. Cysteine 253 (proton donor) is an active-site residue. Glycine 254 to threonine 255 lines the substrate pocket.

It belongs to the proline racemase family.

The catalysed reaction is trans-4-hydroxy-L-proline = cis-4-hydroxy-D-proline. Catalyzes the epimerization of trans-4-hydroxy-L-proline (t4LHyp) to cis-4-hydroxy-D-proline (c4DHyp). Is likely involved in a degradation pathway that converts t4LHyp to alpha-ketoglutarate. Displays no proline racemase activity. In Shewanella loihica (strain ATCC BAA-1088 / PV-4), this protein is 4-hydroxyproline 2-epimerase.